The sequence spans 346 residues: uncharacterized protein (346 aa).

The next 8 helical transmembrane spans lie at 15 to 35 (YLRGFALLGIILVNILGLLTV), 55 to 75 (VEARFYPIFSFLFGVGFYLFI), 93 to 113 (ILVLFIFGFIHFLFQPGEALT), 139 to 159 (ILLLFVSIFAAKIFMPLPLIL), 182 to 202 (IFTFFMFILSVGGLLLQYCYV), 229 to 249 (LGVATGPILSAFYAGFLLLLL), 269 to 289 (LTNYISQTALILLAGKLFHLF), and 295 to 315 (LQSLWLCLAIYVIQLIFSAMW).

To E.coli YeiB, B.subtilis YxaH and B.subtilis YrkO.

It is found in the cell membrane. In terms of biological role, involved in transport. This is an uncharacterized protein from Bacillus acidopullulyticus.